A 201-amino-acid polypeptide reads, in one-letter code: Rac-like GTP-binding protein ARAC2 (201 aa).

G13–T20 serves as a coordination point for GTP. Residues Y35–F43 carry the Effector region motif. Residues D60–Q64 and T118–D121 each bind GTP. C198 carries the post-translational modification Cysteine methyl ester. The S-geranylgeranyl cysteine moiety is linked to residue C198. The propeptide at F199–L201 is removed in mature form.

Belongs to the small GTPase superfamily. Rho family. Expressed exclusively in the root, hypocotyl and stem.

The protein localises to the cytoplasm. It localises to the membrane. Its function is as follows. Inactive GDP-bound Rho GTPases reside in the cytosol, are found in a complex with Rho GDP-dissociation inhibitors (Rho GDIs), and are released from the GDI protein in order to translocate to membranes upon activation. In Arabidopsis thaliana (Mouse-ear cress), this protein is Rac-like GTP-binding protein ARAC2 (ARAC2).